Reading from the N-terminus, the 97-residue chain is Plastocyanin A/B (97 aa).

Residues A1 to N97 enclose the Plastocyanin-like domain. Cu cation-binding residues include H37, C82, H85, and M90.

The protein belongs to the plastocyanin family. It depends on Cu(2+) as a cofactor.

The protein resides in the plastid. Its subcellular location is the chloroplast thylakoid membrane. Its function is as follows. Participates in electron transfer between P700 and the cytochrome b6-f complex in photosystem I. In Petroselinum crispum (Parsley), this protein is Plastocyanin A/B (PETE).